Reading from the N-terminus, the 1376-residue chain is DNA-directed RNA polymerase subunit beta'' (1376 aa).

Residues Cys221, Cys290, Cys297, and Cys300 each contribute to the Zn(2+) site. A disordered region spans residues 895–919; that stretch reads PSGSGFPSDNELDHSNRNPFSSSYP.

The protein belongs to the RNA polymerase beta' chain family. RpoC2 subfamily. In terms of assembly, in plastids the minimal PEP RNA polymerase catalytic core is composed of four subunits: alpha, beta, beta', and beta''. When a (nuclear-encoded) sigma factor is associated with the core the holoenzyme is formed, which can initiate transcription. The cofactor is Zn(2+).

The protein resides in the plastid. It localises to the chloroplast. It catalyses the reaction RNA(n) + a ribonucleoside 5'-triphosphate = RNA(n+1) + diphosphate. DNA-dependent RNA polymerase catalyzes the transcription of DNA into RNA using the four ribonucleoside triphosphates as substrates. This chain is DNA-directed RNA polymerase subunit beta'', found in Pelargonium hortorum (Common geranium).